A 316-amino-acid chain; its full sequence is Protein C4 (316 aa).

Belongs to the poxviridae OPG031 protein family.

Its subcellular location is the host cytoplasm. The protein localises to the host nucleus. Functionally, plays a role in the inhibition of host NF-kappa-B activation. Mechanistically, blocks the subunit p65/RELA translocation into the host nucleus. In Vaccinia virus (strain Western Reserve) (VACV), this protein is Protein C4 (OPG031).